A 481-amino-acid polypeptide reads, in one-letter code: Proline--tRNA ligase (481 aa).

Belongs to the class-II aminoacyl-tRNA synthetase family. ProS type 3 subfamily. Homodimer.

It localises to the cytoplasm. The catalysed reaction is tRNA(Pro) + L-proline + ATP = L-prolyl-tRNA(Pro) + AMP + diphosphate. In terms of biological role, catalyzes the attachment of proline to tRNA(Pro) in a two-step reaction: proline is first activated by ATP to form Pro-AMP and then transferred to the acceptor end of tRNA(Pro). This chain is Proline--tRNA ligase, found in Thermococcus kodakarensis (strain ATCC BAA-918 / JCM 12380 / KOD1) (Pyrococcus kodakaraensis (strain KOD1)).